A 375-amino-acid chain; its full sequence is Lipid-A-disaccharide synthase (375 aa).

Belongs to the LpxB family.

The enzyme catalyses a lipid X + a UDP-2-N,3-O-bis[(3R)-3-hydroxyacyl]-alpha-D-glucosamine = a lipid A disaccharide + UDP + H(+). Its pathway is bacterial outer membrane biogenesis; LPS lipid A biosynthesis. Functionally, condensation of UDP-2,3-diacylglucosamine and 2,3-diacylglucosamine-1-phosphate to form lipid A disaccharide, a precursor of lipid A, a phosphorylated glycolipid that anchors the lipopolysaccharide to the outer membrane of the cell. This chain is Lipid-A-disaccharide synthase, found in Pseudomonas putida (strain GB-1).